The sequence spans 255 residues: uncharacterized protein (255 aa).

8 residues coordinate NADP(+): I13, R37, D55, N81, Y148, K152, V180, and T182. Y148 functions as the Proton donor in the catalytic mechanism. K152 functions as the Lowers pKa of active site Tyr in the catalytic mechanism.

It belongs to the short-chain dehydrogenases/reductases (SDR) family.

Its function is as follows. Involved in osmoadaptation. This is an uncharacterized protein from Emericella nidulans (strain FGSC A4 / ATCC 38163 / CBS 112.46 / NRRL 194 / M139) (Aspergillus nidulans).